Consider the following 127-residue polypeptide: Succinate dehydrogenase cytochrome b560 subunit (127 aa).

2 helical membrane-spanning segments follow: residues 36–53 (VGLAFFFTTFLIFIRIIL) and 60–83 (NLLTLISFEISQWIIIYFNLFILL). H88 lines the heme pocket. Residues 109–126 (LSKFSLFLLVSLSLILIF) traverse the membrane as a helical segment.

This sequence belongs to the cytochrome b560 family. As to quaternary structure, forms part of complex II containing four subunits: a 70 kDa flavoprotein (FP), a 27 kDa iron-sulfur protein (IP), a cytochrome B and a membrane-anchoring protein. It depends on heme as a cofactor.

It is found in the mitochondrion inner membrane. Its pathway is carbohydrate metabolism; tricarboxylic acid cycle. Functionally, membrane-anchoring subunit of succinate dehydrogenase (SDH) that is involved in complex II of the mitochondrial electron transport chain and is responsible for transferring electrons from succinate to ubiquinone (coenzyme Q). The chain is Succinate dehydrogenase cytochrome b560 subunit (SDH3) from Chondrus crispus (Carrageen Irish moss).